Reading from the N-terminus, the 510-residue chain is MPGLGRRAQWLCWWWGLLCSCGPPPLRPPLPVAAAAAGGQLLGAGGSPVRAEQPPPQSSSSGFLYRRLKTHEKREMQKEILSVLGLPHRPRPLHGLQQPQPPVLPPQQQQQQQQQQTAREEPPPGRLKSAPLFMLDLYNALSNDDEEDGASEGVGQEPGSHGGASSSQLRQPSPGAAHSLNRKSLLAPGPGGGASPLTSAQDSAFLNDADMVMSFVNLVEYDKEFSPHQRHHKEFKFNLSQIPEGEAVTAAEFRVYKDCVVGSFKNQTFLISIYQVLQEHQHRDSDLFLLDTRVVWASEEGWLEFDITATSNLWVVTPQHNMGLQLSVVTRDGLHVNPRAAGLVGRDGPYDKQPFMVAFFKVSEVHVRTTRSASSRRRQQSRNRSTQSQDVSRGSGSSDYNGSELKTACKKHELYVSFQDLGWQDWIIAPKGYAANYCDGECSFPLNAHMNATNHAIVQTLVHLMNPEYVPKPCCAPTKLNAISVLYFDDNSNVILKKYRNMVVRACGCH.

The signal sequence occupies residues Met-1 to Ser-20. Positions Cys-21–Arg-371 are excised as a propeptide. 2 disordered regions span residues Pro-87 to Ser-129 and Asn-143 to Ser-199. Residues Pro-106–Gln-116 show a composition bias toward low complexity. Residues Asn-238, Asn-266, Asn-383, Asn-401, and Asn-451 are each glycosylated (N-linked (GlcNAc...) asparagine). The segment at Thr-370–Gly-402 is disordered. A compositionally biased stretch (polar residues) spans Asp-390–Asn-401. Cystine bridges form between Cys-409–Cys-475, Cys-438–Cys-507, and Cys-442–Cys-509.

Belongs to the TGF-beta family. Interacts with SOSTDC1. Interacts (when glycosylated) with type I receptor ACVR1; the interaction may induce HAMP expression. Interacts with type II receptor ACVR2B. Interacts with Hemojuvelin/HJV. Interacts with ERFE; the interaction inhibits BMP-induced transcription of HAMP. Interacts with BMPR1A/ALK3. Forms heterodimers with BMP2 in vitro; the heterodimer then binds to its receptor BMPR1A /ALK3 and may induce HAMP expression. As to expression, expressed in the lung. Low levels seen in the kidney.

The protein localises to the secreted. Its function is as follows. Growth factor of the TGF-beta superfamily that plays essential roles in many developmental processes including cartilage and bone formation. Also plays an important role in the regulation of HAMP/hepcidin expression and iron metabolism by acting as a ligand for hemojuvelin/HJV. Also acts to promote expression of HAMP, potentially via the interaction with its receptor BMPR1A/ALK3. Initiates the canonical BMP signaling cascade by associating with type I receptor ACVR1 and type II receptor ACVR2B. In turn, ACVR1 propagates signal by phosphorylating SMAD1/5/8 that travel to the nucleus and act as activators and repressors of transcription of target. Can also signal through non-canonical pathway such as TAZ-Hippo signaling cascade to modulate VEGF signaling by regulating VEGFR2 expression. The polypeptide is Bone morphogenetic protein 6 (Bmp6) (Mus musculus (Mouse)).